A 2039-amino-acid polypeptide reads, in one-letter code: PHD finger protein 3 (2039 aa).

Residues Ser-97 and Ser-125 each carry the phosphoserine modification. A compositionally biased stretch (polar residues) spans 144-168; that stretch reads STIAKRSNAAPLSNTKKASGKTVST. The disordered stretch occupies residues 144 to 178; it reads STIAKRSNAAPLSNTKKASGKTVSTAKAGVKQPER. 2 positions are modified to phosphoserine: Ser-283 and Ser-299. Basic and acidic residues predominate over residues 460 to 472; sequence ESHETANLQDDRN. Disordered stretches follow at residues 460–492, 528–555, and 596–685; these read ESHE…KHTK, VKRN…IDKE, and LSDK…SLDE. Low complexity predominate over residues 473-483; it reads SQSSSVSYLES. Residues 596 to 612 are compositionally biased toward basic and acidic residues; it reads LSDKSHAHPGCLKEPHH. Polar residues predominate over residues 617 to 640; it reads GHVSHSSQKQCHKPQQQAPAMKTN. The segment covering 642 to 670 has biased composition (basic and acidic residues); the sequence is HVKEELEHPGVEHFKEEDKLKLKKPEKNL. Lys-644 participates in a covalent cross-link: Glycyl lysine isopeptide (Lys-Gly) (interchain with G-Cter in SUMO2). Position 680 is a phosphoserine (Ser-680). Residues 717–772 form a PHD-type zinc finger; sequence SKQCGFCKKPHGNRFMVGCGRCDDWFHGDCVGLSLSQAQQMGEEDKEYVCVKCCAE. The segment at 860-904 is disordered; the sequence is GQPVLPRRSSEEKSEKIPKESTTVTCTGEKASKPGTHEKQEMKKK. 2 stretches are compositionally biased toward basic and acidic residues: residues 867–878 and 889–900; these read RSSEEKSEKIPK and KASKPGTHEKQE. Residues 927 to 1046 enclose the TFIIS central domain; the sequence is IRQSVRHSLK…MIEKEQREVE (120 aa). Residue Lys-964 forms a Glycyl lysine isopeptide (Lys-Gly) (interchain with G-Cter in SUMO2) linkage. Ser-1014 is subject to Phosphoserine. The disordered stretch occupies residues 1078-1109; that stretch reads EPAANKSLEKPEGSEKQKEEVDSMSKDTTSQH. Positions 1084–1102 are enriched in basic and acidic residues; it reads SLEKPEGSEKQKEEVDSMS. Phosphoserine is present on residues Ser-1133, Ser-1148, and Ser-1178. 3 disordered regions span residues 1171-1191, 1360-1380, and 1581-1623; these read FEEE…RPEM, STSH…PPDK, and KQEE…VGKG. A compositionally biased stretch (basic and acidic residues) spans 1581–1598; it reads KQEETVESKEKTLKRQLQ. Residues Ser-1614 and Ser-1642 each carry the phosphoserine modification. Disordered stretches follow at residues 1643-1684 and 1776-1800; these read PQFI…LPGL and PSKS…PMRP. Residues 1666 to 1684 show a composition bias toward basic and acidic residues; the sequence is ESKDGDSCRNGEKHMLPGL. A compositionally biased stretch (low complexity) spans 1781–1797; the sequence is TFTSRSTSPRTSTNFSP. Arg-1867 and Arg-1877 each carry asymmetric dimethylarginine. The interval 1884–2039 is disordered; it reads FYQVKDIRRP…DHTDRTKSKR (156 aa). Basic and acidic residues-rich tracts occupy residues 1888 to 1902 and 1912 to 2039; these read KDIR…DPWG and PFNR…KSKR. 2 positions are modified to phosphoserine: Ser-1898 and Ser-1925. Residue Lys-1931 forms a Glycyl lysine isopeptide (Lys-Gly) (interchain with G-Cter in SUMO2) linkage.

In terms of tissue distribution, ubiquitous. Expression is significantly reduced or lost in glioblastomas, glioblastoma cell lines, anaplastic astrocytomas, and astrocytomas.

This Homo sapiens (Human) protein is PHD finger protein 3 (PHF3).